The following is a 396-amino-acid chain: Elongation factor Tu (396 aa).

Positions 11–205 constitute a tr-type G domain; it reads KPHVNIGTIG…TIDEYIPTPV (195 aa). The G1 stretch occupies residues 20–27; the sequence is GHVDHGKT. 20–27 is a GTP binding site; sequence GHVDHGKT. Residue Thr-27 coordinates Mg(2+). A G2 region spans residues 61–65; sequence GITIN. The G3 stretch occupies residues 82–85; it reads DAPG. GTP is bound by residues 82 to 86 and 137 to 140; these read DAPGH and NKTD. A G4 region spans residues 137-140; that stretch reads NKTD. Positions 175-177 are G5; it reads SAL.

The protein belongs to the TRAFAC class translation factor GTPase superfamily. Classic translation factor GTPase family. EF-Tu/EF-1A subfamily. As to quaternary structure, monomer.

The protein localises to the cytoplasm. It carries out the reaction GTP + H2O = GDP + phosphate + H(+). Functionally, GTP hydrolase that promotes the GTP-dependent binding of aminoacyl-tRNA to the A-site of ribosomes during protein biosynthesis. The chain is Elongation factor Tu from Lacticaseibacillus casei (strain BL23) (Lactobacillus casei).